The following is an 87-amino-acid chain: uncharacterized protein (87 aa).

Residues 48–70 (GIYIPHTLIFWMCPRAMGTAITF) form a helical membrane-spanning segment.

The protein localises to the host membrane. This is an uncharacterized protein from Gallid herpesvirus 2 (strain Chicken/Md5/ATCC VR-987) (GaHV-2).